Consider the following 267-residue polypeptide: 3-deoxy-manno-octulosonate cytidylyltransferase (267 aa).

Belongs to the KdsB family.

The protein localises to the cytoplasm. It carries out the reaction 3-deoxy-alpha-D-manno-oct-2-ulosonate + CTP = CMP-3-deoxy-beta-D-manno-octulosonate + diphosphate. It functions in the pathway nucleotide-sugar biosynthesis; CMP-3-deoxy-D-manno-octulosonate biosynthesis; CMP-3-deoxy-D-manno-octulosonate from 3-deoxy-D-manno-octulosonate and CTP: step 1/1. Its pathway is bacterial outer membrane biogenesis; lipopolysaccharide biosynthesis. Activates KDO (a required 8-carbon sugar) for incorporation into bacterial lipopolysaccharide in Gram-negative bacteria. The chain is 3-deoxy-manno-octulosonate cytidylyltransferase from Paraburkholderia phymatum (strain DSM 17167 / CIP 108236 / LMG 21445 / STM815) (Burkholderia phymatum).